Reading from the N-terminus, the 227-residue chain is Cytochrome c oxidase subunit 2 (227 aa).

Topologically, residues 1–14 are mitochondrial intermembrane; it reads MAYPVQLGFQDAAS. A helical transmembrane segment spans residues 15-45; it reads PIMEELLYFHDHTLMIMFLISSLVLYIISLM. Residues 46–59 lie on the Mitochondrial matrix side of the membrane; sequence LTTELIHTSTMDAQ. The chain crosses the membrane as a helical span at residues 60–87; that stretch reads EVETVWTILPAVILILIALPSLRILYMM. Topologically, residues 88–227 are mitochondrial intermembrane; sequence DEISTPSLTL…HFEEWLLSML (140 aa). 6 residues coordinate Cu cation: histidine 161, cysteine 196, glutamate 198, cysteine 200, histidine 204, and methionine 207. Glutamate 198 contacts Mg(2+).

This sequence belongs to the cytochrome c oxidase subunit 2 family. As to quaternary structure, component of the cytochrome c oxidase (complex IV, CIV), a multisubunit enzyme composed of 14 subunits. The complex is composed of a catalytic core of 3 subunits MT-CO1, MT-CO2 and MT-CO3, encoded in the mitochondrial DNA, and 11 supernumerary subunits COX4I, COX5A, COX5B, COX6A, COX6B, COX6C, COX7A, COX7B, COX7C, COX8 and NDUFA4, which are encoded in the nuclear genome. The complex exists as a monomer or a dimer and forms supercomplexes (SCs) in the inner mitochondrial membrane with NADH-ubiquinone oxidoreductase (complex I, CI) and ubiquinol-cytochrome c oxidoreductase (cytochrome b-c1 complex, complex III, CIII), resulting in different assemblies (supercomplex SCI(1)III(2)IV(1) and megacomplex MCI(2)III(2)IV(2)). Found in a complex with TMEM177, COA6, COX18, COX20, SCO1 and SCO2. Interacts with TMEM177 in a COX20-dependent manner. Interacts with COX20. Interacts with COX16. Cu cation serves as cofactor.

It is found in the mitochondrion inner membrane. It catalyses the reaction 4 Fe(II)-[cytochrome c] + O2 + 8 H(+)(in) = 4 Fe(III)-[cytochrome c] + 2 H2O + 4 H(+)(out). Component of the cytochrome c oxidase, the last enzyme in the mitochondrial electron transport chain which drives oxidative phosphorylation. The respiratory chain contains 3 multisubunit complexes succinate dehydrogenase (complex II, CII), ubiquinol-cytochrome c oxidoreductase (cytochrome b-c1 complex, complex III, CIII) and cytochrome c oxidase (complex IV, CIV), that cooperate to transfer electrons derived from NADH and succinate to molecular oxygen, creating an electrochemical gradient over the inner membrane that drives transmembrane transport and the ATP synthase. Cytochrome c oxidase is the component of the respiratory chain that catalyzes the reduction of oxygen to water. Electrons originating from reduced cytochrome c in the intermembrane space (IMS) are transferred via the dinuclear copper A center (CU(A)) of subunit 2 and heme A of subunit 1 to the active site in subunit 1, a binuclear center (BNC) formed by heme A3 and copper B (CU(B)). The BNC reduces molecular oxygen to 2 water molecules using 4 electrons from cytochrome c in the IMS and 4 protons from the mitochondrial matrix. The sequence is that of Cytochrome c oxidase subunit 2 (MT-CO2) from Eulemur macaco (Black lemur).